The sequence spans 254 residues: MKMKFGIISIFPEMFKAINDFGVTARAIKDSKVSISCFNPRDYTTDRHATVDDTSFGGGAGMVMKYQPLSAAIEDAKNTLGCGTKVVYLSPQGSIFNHRKAQELLQNDSLILLCGRYEGVDERLIQDYVDEEISVGDFVLSGGELPAMLVMDSLIRLLPEVLGNKESVVEDSFYDGLLDYPHYTKPAVLPNGNAVPDVLLSGNHKEIAKWRRKQKLIRTYERRKDLIECLCLSAKDKQILDDYKIDKVSTKGEE.

Residues Gly-115 and 135–140 each bind S-adenosyl-L-methionine; that span reads VGDFVL.

It belongs to the RNA methyltransferase TrmD family. As to quaternary structure, homodimer.

Its subcellular location is the cytoplasm. It catalyses the reaction guanosine(37) in tRNA + S-adenosyl-L-methionine = N(1)-methylguanosine(37) in tRNA + S-adenosyl-L-homocysteine + H(+). Functionally, specifically methylates guanosine-37 in various tRNAs. The sequence is that of tRNA (guanine-N(1)-)-methyltransferase from Francisella tularensis subsp. tularensis (strain FSC 198).